The following is a 275-amino-acid chain: Large ribosomal subunit protein uL2 (275 aa).

Residues 220 to 275 (QTRGAAMNPVDHPHGGGEGKTGSSGHPVSPWGMPAKGFKTRKKKASDKLIISRRKK) form a disordered region. Over residues 257-275 (FKTRKKKASDKLIISRRKK) the composition is skewed to basic residues.

This sequence belongs to the universal ribosomal protein uL2 family. As to quaternary structure, part of the 50S ribosomal subunit. Forms a bridge to the 30S subunit in the 70S ribosome.

In terms of biological role, one of the primary rRNA binding proteins. Required for association of the 30S and 50S subunits to form the 70S ribosome, for tRNA binding and peptide bond formation. It has been suggested to have peptidyltransferase activity; this is somewhat controversial. Makes several contacts with the 16S rRNA in the 70S ribosome. In Wolinella succinogenes (strain ATCC 29543 / DSM 1740 / CCUG 13145 / JCM 31913 / LMG 7466 / NCTC 11488 / FDC 602W) (Vibrio succinogenes), this protein is Large ribosomal subunit protein uL2.